A 691-amino-acid polypeptide reads, in one-letter code: Elongation factor G (691 aa).

The tr-type G domain occupies 8–282 (ERVRNIGIAA…AVVDYLPAPI (275 aa)). GTP is bound by residues 17 to 24 (AHIDAGKT), 81 to 85 (DTPGH), and 135 to 138 (NKMD).

This sequence belongs to the TRAFAC class translation factor GTPase superfamily. Classic translation factor GTPase family. EF-G/EF-2 subfamily.

It is found in the cytoplasm. In terms of biological role, catalyzes the GTP-dependent ribosomal translocation step during translation elongation. During this step, the ribosome changes from the pre-translocational (PRE) to the post-translocational (POST) state as the newly formed A-site-bound peptidyl-tRNA and P-site-bound deacylated tRNA move to the P and E sites, respectively. Catalyzes the coordinated movement of the two tRNA molecules, the mRNA and conformational changes in the ribosome. The chain is Elongation factor G from Thermosynechococcus vestitus (strain NIES-2133 / IAM M-273 / BP-1).